The sequence spans 433 residues: Glucoside xylosyltransferase 1 (433 aa).

Residues 1–6 (MRRFAR) lie on the Cytoplasmic side of the membrane. A helical; Signal-anchor for type II membrane protein transmembrane segment spans residues 7 to 29 (VALLFLGCGVCSLLYGVSQLALS). Topologically, residues 30–433 (LEQEAGGARQ…DLSVRRSKGS (404 aa)) are lumenal. The segment at 39-64 (QRQARESAAPGGGRQAGSADGGEEGA) is disordered. N-linked (GlcNAc...) asparagine glycans are attached at residues N69, N166, N271, N305, and N380.

Belongs to the glycosyltransferase 8 family.

It is found in the membrane. It carries out the reaction 3-O-(beta-D-glucosyl)-L-seryl-[EGF-like domain protein] + UDP-alpha-D-xylose = 3-O-[alpha-D-xylosyl-(1-&gt;3)-beta-D-glucosyl]-L-seryl-[EGF-like domain protein] + UDP + H(+). Its function is as follows. Glycosyltransferase which elongates the O-linked glucose attached to EGF-like repeats in the extracellular domain of Notch proteins by catalyzing the addition of xylose. The polypeptide is Glucoside xylosyltransferase 1 (GXYLT1) (Gallus gallus (Chicken)).